We begin with the raw amino-acid sequence, 258 residues long: Ribosomal RNA small subunit methyltransferase A (258 aa).

S-adenosyl-L-methionine is bound by residues H9, L11, G36, E57, D83, and N102.

The protein belongs to the class I-like SAM-binding methyltransferase superfamily. rRNA adenine N(6)-methyltransferase family. RsmA subfamily.

The protein localises to the cytoplasm. It catalyses the reaction adenosine(1518)/adenosine(1519) in 16S rRNA + 4 S-adenosyl-L-methionine = N(6)-dimethyladenosine(1518)/N(6)-dimethyladenosine(1519) in 16S rRNA + 4 S-adenosyl-L-homocysteine + 4 H(+). Its function is as follows. Specifically dimethylates two adjacent adenosines (A1518 and A1519) in the loop of a conserved hairpin near the 3'-end of 16S rRNA in the 30S particle. May play a critical role in biogenesis of 30S subunits. The protein is Ribosomal RNA small subunit methyltransferase A of Caulobacter vibrioides (strain ATCC 19089 / CIP 103742 / CB 15) (Caulobacter crescentus).